We begin with the raw amino-acid sequence, 64 residues long: Large ribosomal subunit protein bL35 (64 aa).

It belongs to the bacterial ribosomal protein bL35 family.

This is Large ribosomal subunit protein bL35 from Carboxydothermus hydrogenoformans (strain ATCC BAA-161 / DSM 6008 / Z-2901).